The primary structure comprises 405 residues: Homocitrate synthase AksA (405 aa).

A Pyruvate carboxyltransferase domain is found at 23–274; that stretch reads IEICDVTLRD…IERYDTTKLT (252 aa).

This sequence belongs to the alpha-IPM synthase/homocitrate synthase family.

It carries out the reaction acetyl-CoA + 2-oxoglutarate + H2O = (2R)-homocitrate + CoA + H(+). The enzyme catalyses 2-oxoadipate + acetyl-CoA + H2O = (R)-dihomocitrate + CoA + H(+). It catalyses the reaction 2-oxoheptanedioate + acetyl-CoA + H2O = (R)-trihomocitrate + CoA + H(+). It participates in organic acid metabolism; 2-oxosuberate biosynthesis. Its function is as follows. Catalyzes the condensation of alpha-ketoglutarate and acetyl-CoA to form (R)-homocitrate. Can also catalyze the condensation of alpha-ketoadipate with acetyl-CoA to form (R)-homo(2)citrate, and the condensation of alpha-ketopimelate with acetyl-CoA to form (R)-homo(3)citrate. These reactions are part of the biosynthesis pathway of coenzyme B and biotin. This Methanosarcina acetivorans (strain ATCC 35395 / DSM 2834 / JCM 12185 / C2A) protein is Homocitrate synthase AksA (aksA).